The following is a 201-amino-acid chain: MLLDGGILSTSVLGQRVAGVDEVGRGPLAGPVIAGAVILDPECPISGVKDSKQLTAPARERLAALIQAQAVAWALGRAEAAEIDQFNILQASLLAMERAISALSVVPDLVLVDGKHCPPTVCPVRAIVKGDQQIMAIGAASIVAKVARDAEMIAFEESYPGYGFGIHKGYPTRAHLAALKALGPCSIHRRSFRPVRRFLEA.

Positions 15–201 (QRVAGVDEVG…FRPVRRFLEA (187 aa)) constitute an RNase H type-2 domain. The a divalent metal cation site is built by D21, E22, and D113.

It belongs to the RNase HII family. Requires Mn(2+) as cofactor. The cofactor is Mg(2+).

It is found in the cytoplasm. The catalysed reaction is Endonucleolytic cleavage to 5'-phosphomonoester.. Endonuclease that specifically degrades the RNA of RNA-DNA hybrids. This chain is Ribonuclease HII, found in Nitrosococcus oceani (strain ATCC 19707 / BCRC 17464 / JCM 30415 / NCIMB 11848 / C-107).